The chain runs to 623 residues: Sphingomyelinase C 2 (623 aa).

The N-terminal stretch at 1–25 (MINKITKPKLLIGYYLLLFSLIRCL) is a signal peptide. Composition is skewed to low complexity over residues 51–61 (VNSVSINNDPA) and 67–80 (NPAS…NAVP). Residues 51 to 121 (VNSVSINNDP…DPNPANLASA (71 aa)) form a disordered region. The segment covering 89-102 (NPVNPASANSNQVN) has biased composition (polar residues). Positions 110-121 (PADPNPANLASA) are enriched in low complexity.

The protein resides in the secreted. It catalyses the reaction a sphingomyelin + H2O = phosphocholine + an N-acylsphing-4-enine + H(+). This chain is Sphingomyelinase C 2 (sph2), found in Leptospira interrogans serogroup Icterohaemorrhagiae serovar Lai (strain 56601).